The sequence spans 826 residues: Eukaryotic translation initiation factor 3 subunit C (826 aa).

2 disordered regions span residues 1–71 (MSRF…GKGA) and 205–227 (SGGD…PRAK). The segment covering 10–20 (DSDDSSSDEDL) has biased composition (acidic residues). Positions 21–30 (YGSGSESGSD) are enriched in low complexity. Residues 32 to 65 (SQDEQDGGDDNDDDMSDDSMFADDSDDDSDDDED) are compositionally biased toward acidic residues. Basic and acidic residues predominate over residues 218–227 (KEDKPKPRAK). Residues 605 to 779 (FHTHINLELL…NSVVFTQAVQ (175 aa)) enclose the PCI domain.

This sequence belongs to the eIF-3 subunit C family. As to quaternary structure, component of the eukaryotic translation initiation factor 3 (eIF-3) complex.

It is found in the cytoplasm. Component of the eukaryotic translation initiation factor 3 (eIF-3) complex, which is involved in protein synthesis of a specialized repertoire of mRNAs and, together with other initiation factors, stimulates binding of mRNA and methionyl-tRNAi to the 40S ribosome. The eIF-3 complex specifically targets and initiates translation of a subset of mRNAs involved in cell proliferation. The polypeptide is Eukaryotic translation initiation factor 3 subunit C (Yarrowia lipolytica (strain CLIB 122 / E 150) (Yeast)).